Consider the following 282-residue polypeptide: Putative dolichyldiphosphatase (282 aa).

The next 2 membrane-spanning stretches (helical) occupy residues 26-46 (LLCA…ATLI) and 93-113 (MPSS…LFLL). The interval 121-153 (QQQQQQQKQKQRERKKQVTNVKTTTTNGSGNGS) is disordered. Low complexity predominate over residues 138-148 (VTNVKTTTTNG). The next 2 membrane-spanning stretches (helical) occupy residues 173–193 (WSFA…GAVA) and 207–227 (VLVG…VTHV).

It belongs to the dolichyldiphosphatase family.

Its subcellular location is the endoplasmic reticulum membrane. The catalysed reaction is a di-trans,poly-cis-dolichyl diphosphate + H2O = a di-trans,poly-cis-dolichyl phosphate + phosphate + H(+). The protein operates within protein modification; protein glycosylation. This is Putative dolichyldiphosphatase from Neurospora crassa (strain ATCC 24698 / 74-OR23-1A / CBS 708.71 / DSM 1257 / FGSC 987).